A 316-amino-acid chain; its full sequence is Ribosomal RNA small subunit methyltransferase H (316 aa).

S-adenosyl-L-methionine is bound by residues 35–37, aspartate 55, phenylalanine 79, aspartate 101, and glutamine 108; that span reads GGH.

The protein belongs to the methyltransferase superfamily. RsmH family.

It localises to the cytoplasm. It carries out the reaction cytidine(1402) in 16S rRNA + S-adenosyl-L-methionine = N(4)-methylcytidine(1402) in 16S rRNA + S-adenosyl-L-homocysteine + H(+). Its function is as follows. Specifically methylates the N4 position of cytidine in position 1402 (C1402) of 16S rRNA. This chain is Ribosomal RNA small subunit methyltransferase H, found in Aliivibrio fischeri (strain ATCC 700601 / ES114) (Vibrio fischeri).